The chain runs to 377 residues: Glutamate 5-kinase (377 aa).

Lysine 20 lines the ATP pocket. Substrate is bound by residues serine 60, aspartate 147, and asparagine 159. Residue 179-180 participates in ATP binding; that stretch reads TD. In terms of domain architecture, PUA spans 285 to 363; that stretch reads AGRLVIDDGA…DKVYQVLGEA (79 aa).

Belongs to the glutamate 5-kinase family.

It is found in the cytoplasm. The catalysed reaction is L-glutamate + ATP = L-glutamyl 5-phosphate + ADP. The protein operates within amino-acid biosynthesis; L-proline biosynthesis; L-glutamate 5-semialdehyde from L-glutamate: step 1/2. Its function is as follows. Catalyzes the transfer of a phosphate group to glutamate to form L-glutamate 5-phosphate. This Acinetobacter baumannii (strain SDF) protein is Glutamate 5-kinase.